A 97-amino-acid chain; its full sequence is YcgL domain-containing protein PSEEN4034 (97 aa).

One can recognise a YcgL domain in the interval 3–87; the sequence is RICSIYKSPR…PDDDYIEHLP (85 aa).

In Pseudomonas entomophila (strain L48), this protein is YcgL domain-containing protein PSEEN4034.